Consider the following 161-residue polypeptide: Phosphopantetheine adenylyltransferase (161 aa).

S9 contacts substrate. ATP contacts are provided by residues 9–10 (SF) and H17. Residues K41, T74, and R88 each coordinate substrate. ATP-binding positions include 89-91 (GVR), E99, and 124-130 (NSFVASS).

The protein belongs to the bacterial CoaD family. In terms of assembly, homohexamer. The cofactor is Mg(2+).

It is found in the cytoplasm. The enzyme catalyses (R)-4'-phosphopantetheine + ATP + H(+) = 3'-dephospho-CoA + diphosphate. It participates in cofactor biosynthesis; coenzyme A biosynthesis; CoA from (R)-pantothenate: step 4/5. Its function is as follows. Reversibly transfers an adenylyl group from ATP to 4'-phosphopantetheine, yielding dephospho-CoA (dPCoA) and pyrophosphate. In Lactobacillus acidophilus (strain ATCC 700396 / NCK56 / N2 / NCFM), this protein is Phosphopantetheine adenylyltransferase.